We begin with the raw amino-acid sequence, 492 residues long: Protein nucleotidyltransferase YdiU (492 aa).

The ATP site is built by G88, G90, R91, K111, D123, G124, R174, and R181. D250 functions as the Proton acceptor in the catalytic mechanism. Residues N251 and D260 each coordinate Mg(2+). ATP is bound at residue D260.

Belongs to the SELO family. Mg(2+) is required as a cofactor. Mn(2+) serves as cofactor.

It carries out the reaction L-seryl-[protein] + ATP = 3-O-(5'-adenylyl)-L-seryl-[protein] + diphosphate. The catalysed reaction is L-threonyl-[protein] + ATP = 3-O-(5'-adenylyl)-L-threonyl-[protein] + diphosphate. The enzyme catalyses L-tyrosyl-[protein] + ATP = O-(5'-adenylyl)-L-tyrosyl-[protein] + diphosphate. It catalyses the reaction L-histidyl-[protein] + UTP = N(tele)-(5'-uridylyl)-L-histidyl-[protein] + diphosphate. It carries out the reaction L-seryl-[protein] + UTP = O-(5'-uridylyl)-L-seryl-[protein] + diphosphate. The catalysed reaction is L-tyrosyl-[protein] + UTP = O-(5'-uridylyl)-L-tyrosyl-[protein] + diphosphate. Its function is as follows. Nucleotidyltransferase involved in the post-translational modification of proteins. It can catalyze the addition of adenosine monophosphate (AMP) or uridine monophosphate (UMP) to a protein, resulting in modifications known as AMPylation and UMPylation. The chain is Protein nucleotidyltransferase YdiU from Rhodopseudomonas palustris (strain BisB5).